Reading from the N-terminus, the 371-residue chain is tRNA/tmRNA (uracil-C(5))-methyltransferase (371 aa).

S-adenosyl-L-methionine-binding residues include glutamine 194, tyrosine 223, asparagine 228, glutamate 244, and aspartate 304. The active-site Nucleophile is cysteine 329. The active-site Proton acceptor is glutamate 363.

The protein belongs to the class I-like SAM-binding methyltransferase superfamily. RNA M5U methyltransferase family. TrmA subfamily.

It catalyses the reaction uridine(54) in tRNA + S-adenosyl-L-methionine = 5-methyluridine(54) in tRNA + S-adenosyl-L-homocysteine + H(+). The enzyme catalyses uridine(341) in tmRNA + S-adenosyl-L-methionine = 5-methyluridine(341) in tmRNA + S-adenosyl-L-homocysteine + H(+). Functionally, dual-specificity methyltransferase that catalyzes the formation of 5-methyluridine at position 54 (m5U54) in all tRNAs, and that of position 341 (m5U341) in tmRNA (transfer-mRNA). The protein is tRNA/tmRNA (uracil-C(5))-methyltransferase of Sulfurovum sp. (strain NBC37-1).